The sequence spans 221 residues: Oxaloacetate tautomerase FAHD1, mitochondrial (221 aa).

The transit peptide at 1–24 (MASTKPLSRFWEWGKNIVCVGRNY) directs the protein to the mitochondrion. Ser-37 bears the Phosphoserine mark. Residues Glu-68, Glu-70, and Asp-99 each coordinate Mg(2+). The residue at position 110 (Lys-110) is an N6-acetyllysine. Lys-112 bears the N6-succinyllysine mark.

Belongs to the FAH family. In terms of assembly, homodimer. It depends on Mg(2+) as a cofactor. Requires Mn(2+) as cofactor.

Its subcellular location is the mitochondrion. The protein resides in the cytoplasm. The protein localises to the cytosol. The catalysed reaction is oxaloacetate = enol-oxaloacetate. It carries out the reaction oxaloacetate + H(+) = pyruvate + CO2. The enzyme catalyses a 3-acylpyruvate + H2O = a carboxylate + pyruvate + H(+). It catalyses the reaction acetylpyruvate + H2O = acetate + pyruvate + H(+). The catalysed reaction is 3-fumarylpyruvate + H2O = fumarate + pyruvate + H(+). With respect to regulation, oxaloacetate decarboxylation is competitively inhibited by oxalate. In terms of biological role, tautomerase that converts enol-oxaloacetate, a strong inhibitor of succinate dehydrogenase, to the physiological keto form of oxaloacetate. It is thereby required to maximize aerobic respiration efficiency by preventing succinate dehydrogenase inhibition. Also acts as a weak oxaloacetate decarboxylase (ODx), catalyzing the decarboxylation of oxaloacetate (OAA) to pyruvate and CO(2), and as such is likely a regulatory enzyme in the TCA cycle. Also displays acylpyruvase activity, being able to hydrolyze acetylpyruvate and fumarylpyruvate in vitro. This is Oxaloacetate tautomerase FAHD1, mitochondrial from Rattus norvegicus (Rat).